The following is a 145-amino-acid chain: D-aminoacyl-tRNA deacylase (145 aa).

Positions 137-138 (GP) match the Gly-cisPro motif, important for rejection of L-amino acids motif.

It belongs to the DTD family. In terms of assembly, homodimer.

The protein localises to the cytoplasm. The enzyme catalyses glycyl-tRNA(Ala) + H2O = tRNA(Ala) + glycine + H(+). It carries out the reaction a D-aminoacyl-tRNA + H2O = a tRNA + a D-alpha-amino acid + H(+). In terms of biological role, an aminoacyl-tRNA editing enzyme that deacylates mischarged D-aminoacyl-tRNAs. Also deacylates mischarged glycyl-tRNA(Ala), protecting cells against glycine mischarging by AlaRS. Acts via tRNA-based rather than protein-based catalysis; rejects L-amino acids rather than detecting D-amino acids in the active site. By recycling D-aminoacyl-tRNA to D-amino acids and free tRNA molecules, this enzyme counteracts the toxicity associated with the formation of D-aminoacyl-tRNA entities in vivo and helps enforce protein L-homochirality. This Photorhabdus laumondii subsp. laumondii (strain DSM 15139 / CIP 105565 / TT01) (Photorhabdus luminescens subsp. laumondii) protein is D-aminoacyl-tRNA deacylase.